A 693-amino-acid polypeptide reads, in one-letter code: Polyribonucleotide nucleotidyltransferase (693 aa).

Residues Asp-486 and Asp-492 each coordinate Mg(2+). Positions 553 to 612 constitute a KH domain; it reads PRFTTLKIHPDKIRDVIGKGGATIRALTEETGTSIDISDDGTVKIASVDKAAGDEARRRI. An S1 motif domain is found at 622–690; it reads GRIYEGRVVK…KQGRIRLSMK (69 aa).

It belongs to the polyribonucleotide nucleotidyltransferase family. As to quaternary structure, component of the RNA degradosome, which is a multiprotein complex involved in RNA processing and mRNA degradation. Mg(2+) serves as cofactor.

The protein resides in the cytoplasm. It carries out the reaction RNA(n+1) + phosphate = RNA(n) + a ribonucleoside 5'-diphosphate. Its function is as follows. Involved in mRNA degradation. Catalyzes the phosphorolysis of single-stranded polyribonucleotides processively in the 3'- to 5'-direction. In Thioalkalivibrio sulfidiphilus (strain HL-EbGR7), this protein is Polyribonucleotide nucleotidyltransferase.